Reading from the N-terminus, the 193-residue chain is Protein CURVATURE THYLAKOID 1D, chloroplastic (193 aa).

The transit peptide at 1–51 directs the protein to the chloroplast; that stretch reads MELCTRSTTIITHLPASFNGHGYLAGKSVDRISLPLQRNVASLVLQSRTLR. Over 52-117 the chain is Stromal; that stretch reads CSRKFPGETV…NDIKLDSDKT (66 aa). The chain crosses the membrane as a helical span at residues 118–138; it reads YSILLYGSGAIVALYLTSAIV. At 139–142 the chain is on the lumenal side; it reads SSLE. Residues 143–163 form a helical membrane-spanning segment; it reads AIPLFPKLMEVVGLGYTLWFT. At 164–193 the chain is on the stromal side; sequence TRYLLFKRNREELKTKVSEIKKQVLGSDSE.

This sequence belongs to the CURT family. In terms of assembly, homo- and heterodimers and trimers.

Its subcellular location is the plastid. The protein localises to the chloroplast thylakoid membrane. In terms of biological role, determines thylakoid architecture by inducing membrane curvature. The chain is Protein CURVATURE THYLAKOID 1D, chloroplastic (CURT1D) from Arabidopsis thaliana (Mouse-ear cress).